The primary structure comprises 102 residues: Urease subunit beta (102 aa).

Belongs to the urease beta subunit family. As to quaternary structure, heterotrimer of UreA (gamma), UreB (beta) and UreC (alpha) subunits. Three heterotrimers associate to form the active enzyme.

Its subcellular location is the cytoplasm. It catalyses the reaction urea + 2 H2O + H(+) = hydrogencarbonate + 2 NH4(+). It participates in nitrogen metabolism; urea degradation; CO(2) and NH(3) from urea (urease route): step 1/1. This Bordetella parapertussis (strain 12822 / ATCC BAA-587 / NCTC 13253) protein is Urease subunit beta.